The following is a 504-amino-acid chain: MKLLEQIEKWAIETPDQTAFVWRDAKITYKQLKEDSDALAHWISSEYPDDRSPIMVYGHMQPEMIINFLGCVKAGHAYIPVDLSIPADRVQRIAENSGAKLLLSGTEVTVTDLPVRIVSEDNLKDIFFTHKGKTPNPEHAVKGDENFYIIYTSGSTGNPKGVQITYNCLVSFTKWAVEDFNLQTGQVFLNQAPFSFDLSVMDIYPSLVTGGTLWAIDKDMIARPKDLFASLEQSDIQVWTSTPSFAEMCLMEASFSESMLPNMKTFLFCGEVLPNEVARKLIERFPKATIMNTYGPTEATVAVTGIHVTEEVLNQYKSLPVGYCKSDCRLLIMKEDGTIAPDGEKGEIVIVGPSVSVGYLGSPELTEKAFTMIDGERAYKTGDAGYVENGLLFYNGRLDFQIKLHGYRMELEEIEHHLRACSYVEGAVIVPIKKGEKYDYLLAVVVPGEHSFEKEFKLTSAIKKELNERLPNYMIPRKFMYQSSIPMTPNGKVDRKKLLSEVTA.

Residue 152 to 153 (TS) participates in ATP binding. Asp-197 provides a ligand contact to D-alanine. ATP is bound at residue 292 to 297 (NTYGPT). Val-301 is a D-alanine binding site. ATP is bound by residues Asp-383, 394-397 (YNGR), and Lys-492. Position 492 (Lys-492) interacts with D-alanine.

This sequence belongs to the ATP-dependent AMP-binding enzyme family. DltA subfamily.

It is found in the cytoplasm. It carries out the reaction holo-[D-alanyl-carrier protein] + D-alanine + ATP = D-alanyl-[D-alanyl-carrier protein] + AMP + diphosphate. The protein operates within cell wall biogenesis; lipoteichoic acid biosynthesis. Functionally, catalyzes the first step in the D-alanylation of lipoteichoic acid (LTA), the activation of D-alanine and its transfer onto the D-alanyl carrier protein (Dcp) DltC. In an ATP-dependent two-step reaction, forms a high energy D-alanyl-AMP intermediate, followed by transfer of the D-alanyl residue as a thiol ester to the phosphopantheinyl prosthetic group of the Dcp. D-alanylation of LTA plays an important role in modulating the properties of the cell wall in Gram-positive bacteria, influencing the net charge of the cell wall. The polypeptide is D-alanine--D-alanyl carrier protein ligase (Bacillus cereus (strain AH187)).